Reading from the N-terminus, the 155-residue chain is Peptide deformylase (155 aa).

Fe cation is bound by residues Cys88 and His130. Residue Glu131 is part of the active site. His134 contributes to the Fe cation binding site.

Belongs to the polypeptide deformylase family. Requires Fe(2+) as cofactor.

The enzyme catalyses N-terminal N-formyl-L-methionyl-[peptide] + H2O = N-terminal L-methionyl-[peptide] + formate. Its function is as follows. Removes the formyl group from the N-terminal Met of newly synthesized proteins. Requires at least a dipeptide for an efficient rate of reaction. N-terminal L-methionine is a prerequisite for activity but the enzyme has broad specificity at other positions. This Pelotomaculum thermopropionicum (strain DSM 13744 / JCM 10971 / SI) protein is Peptide deformylase.